Consider the following 352-residue polypeptide: Divinyl chlorophyll a/b light-harvesting protein PcbB (352 aa).

6 consecutive transmembrane segments (helical) span residues 27–47 (FIAA…AFTL), 89–109 (CTVI…GGIL), 142–162 (FILG…VEWA), 203–223 (VMGG…FHII), 243–263 (AVLS…AFWS), and 307–327 (LANV…WHAL).

Belongs to the PsbB/PsbC family. IsiA/Pcb subfamily. The antenna complex consists of divinyl chlorophylls (a and b) and divinyl chlorophyll a/b binding proteins and binds more divinyl chlorophyll b than does the antenna complex from high-light-adapted Prochlorococcus. Divinyl chlorophyll a serves as cofactor. The cofactor is divinyl chlorophyll b.

Its subcellular location is the cellular thylakoid membrane. Functionally, the antenna complex functions as a light receptor, it captures and delivers excitation energy to photosystems II and I. The Prochlorales pcb genes are not related to higher plant LHCs. The sequence is that of Divinyl chlorophyll a/b light-harvesting protein PcbB (pcbB) from Prochlorococcus marinus (strain NATL2A).